Here is a 463-residue protein sequence, read N- to C-terminus: Ribosomal protein uS12 methylthiotransferase RimO (463 aa).

The MTTase N-terminal domain maps to 15 to 130; it reads PKVGFVSLGC…VMQAVHSHLP (116 aa). Residues C24, C60, C89, C161, C165, and C168 each coordinate [4Fe-4S] cluster. Residues 147–392 enclose the Radical SAM core domain; it reads LTPRHYAYLK…MEVAEQVSAK (246 aa). The region spanning 395-463 is the TRAM domain; it reads ARKVGKTLKV…ADGHDLWGEV (69 aa).

It belongs to the methylthiotransferase family. RimO subfamily. [4Fe-4S] cluster is required as a cofactor.

It localises to the cytoplasm. It carries out the reaction L-aspartate(89)-[ribosomal protein uS12]-hydrogen + (sulfur carrier)-SH + AH2 + 2 S-adenosyl-L-methionine = 3-methylsulfanyl-L-aspartate(89)-[ribosomal protein uS12]-hydrogen + (sulfur carrier)-H + 5'-deoxyadenosine + L-methionine + A + S-adenosyl-L-homocysteine + 2 H(+). Catalyzes the methylthiolation of an aspartic acid residue of ribosomal protein uS12. This is Ribosomal protein uS12 methylthiotransferase RimO from Paraburkholderia phymatum (strain DSM 17167 / CIP 108236 / LMG 21445 / STM815) (Burkholderia phymatum).